The primary structure comprises 832 residues: MPATNSDEPLVKFELYQLKKCYYIVSENATATIFRILKITQSEDELSISIEEAAKILFRQKLQLYLEKLENESADGKLILVTKAYAILGLFRFTAGYYLYLCTERKVVAVIGGHNVYHVDKTQFIELNPSRRHNTSVERKCMSSIEKVDLARTFYFSYSYDLSQTIQYGFTHPIPQHQVRDMFVWNWNMLRPILDSVGIDSPWCIPLIHGFVDQAKLSVYGKPIIVTLIARRSRHFAGARFLRRGIRDDGYVANEVETEQIVFDGSASSFPISSTTPGIPCYTSYVQHRGSIPLRWSQEFSNITPKPPIGIDFHDPFYASTALHFDRLFGHYGIPCIVLNLVKSSEKVKRESLLLDEFESAIQYLNQFLKDSQKIQYIAWDMSAASKKKVPVTKTLEQMASDIVKKTGFFCTADRFFPGTFQTGVVRTNCVDCLDRTNAAQFVIGKCVLAAQLRALGVLDSPQLDYESDAVRLLAEMYHGHGDAIALQYGGSLLVNTLDTYRKNNQWSSTSRDLIESVKRFYSNSFVDFQRQEAISLFLGNFTVHGKIVVFGEKRLQALTEKFKNGQLVRRDYRYWWTPVYVNQELRCKNAYCDSIQRKGIKFPANYFDNVYTPNSISSFSEVLLPNLISTLNFAPLSLIPLLRKSFLPLSYNGFGIEAPSLNPFIPRRNQPRDMFKTSAEEENEDEDEDDDKFRRVSLYKWLFNNEERPVHKFIRKRLHQIPVSNKVQPRDQKQPDFKIPNTDINVYKIHFQYNNISGLADNYTLLSKHDRAMYNNYADYSPDKIKEIKEKELNTYNDYFNSAISENPTLKSDRSEKVAFYSAWITDYKST.

An SAC domain is found at 145 to 491; sequence IEKVDLARTF…GDAIALQYGG (347 aa).

As to quaternary structure, component of the PI(3,5)P2 regulatory complex. Mg(2+) serves as cofactor.

The protein localises to the cytoplasm. It is found in the vacuole membrane. It catalyses the reaction a 1,2-diacyl-sn-glycero-3-phospho-(1D-myo-inositol-3,5-bisphosphate) + H2O = a 1,2-diacyl-sn-glycero-3-phospho-(1D-myo-inositol-3-phosphate) + phosphate. Functionally, the PI(3,5)P2 regulatory complex regulates both the synthesis and turnover of phosphatidylinositol 3,5-bisphosphate (PtdIns(3,5)P2). In Schizosaccharomyces pombe (strain 972 / ATCC 24843) (Fission yeast), this protein is Polyphosphoinositide phosphatase.